The following is a 257-amino-acid chain: Imidazole glycerol phosphate synthase subunit HisF (257 aa).

Active-site residues include Asp12 and Asp131.

This sequence belongs to the HisA/HisF family. Heterodimer of HisH and HisF.

It localises to the cytoplasm. The catalysed reaction is 5-[(5-phospho-1-deoxy-D-ribulos-1-ylimino)methylamino]-1-(5-phospho-beta-D-ribosyl)imidazole-4-carboxamide + L-glutamine = D-erythro-1-(imidazol-4-yl)glycerol 3-phosphate + 5-amino-1-(5-phospho-beta-D-ribosyl)imidazole-4-carboxamide + L-glutamate + H(+). It participates in amino-acid biosynthesis; L-histidine biosynthesis; L-histidine from 5-phospho-alpha-D-ribose 1-diphosphate: step 5/9. Functionally, IGPS catalyzes the conversion of PRFAR and glutamine to IGP, AICAR and glutamate. The HisF subunit catalyzes the cyclization activity that produces IGP and AICAR from PRFAR using the ammonia provided by the HisH subunit. The sequence is that of Imidazole glycerol phosphate synthase subunit HisF from Paraburkholderia phymatum (strain DSM 17167 / CIP 108236 / LMG 21445 / STM815) (Burkholderia phymatum).